The following is a 297-amino-acid chain: HTH-type transcriptional regulator ArgP (297 aa).

The 57-residue stretch at proline 4–threonine 60 folds into the HTH lysR-type domain. Residues phenylalanine 21 to lysine 40 constitute a DNA-binding region (H-T-H motif).

It belongs to the LysR transcriptional regulatory family. As to quaternary structure, homodimer.

Functionally, controls the transcription of genes involved in arginine and lysine metabolism. The chain is HTH-type transcriptional regulator ArgP from Pectobacterium atrosepticum (strain SCRI 1043 / ATCC BAA-672) (Erwinia carotovora subsp. atroseptica).